A 494-amino-acid chain; its full sequence is MRLSWKERVFMVLLGVAAASGLTMLILILVKATNVLLPADTKFGILFDAGSSHTSLFVYQWPANKEKDTGVVSQALACQVEGPGISSYTSDPTQAGESLKSCLQEALALIPQTQHPVTPAFLGATAGMRLLSQKNSSQAQDILAAVSQTLSRAPVDFWGARILAGQDEGAFGWITVNYVLGMLLKYSSGQWILPEDGTLVGALDLGGASTQISFVPQGPILDQSTQVTFRLYGANYSVYTHSYLCFGRDQILRRLLAELVQSSQVARVRHPCYHSGYQATLSLASLYDSPCVHTPDSLNYTQNLTVEGIGNPGNCVAALRGLFNFSSCKGQEDCAFNGVYQPPVHGQFYAFSNFYYTFQFLNLTSRQPLNIVNDTIWKFCQKPWRLVEDSYPGQERWLRDYCASGLYILVLLLEGYKFSEETWPNIQFQKQAGGTDIGWTLGFMLNLTGMIPAEALTQWRAQSYSIWIAGVVFAVLTLVAILGAAAVQLFWTQD.

Over 1-8 (MRLSWKER) the chain is Cytoplasmic. A helical transmembrane segment spans residues 9-29 (VFMVLLGVAAASGLTMLILIL). Over 30 to 465 (VKATNVLLPA…LTQWRAQSYS (436 aa)) the chain is Extracellular. C78 and C102 are disulfide-bonded. E168 (proton acceptor) is an active-site residue. Cysteines 245 and 291 form a disulfide. N-linked (GlcNAc...) asparagine glycans are attached at residues N299 and N303. Cysteines 328 and 334 form a disulfide. N-linked (GlcNAc...) asparagine glycosylation occurs at N362. A disulfide bridge connects residues C380 and C402. Residues 466–486 (IWIAGVVFAVLTLVAILGAAA) form a helical membrane-spanning segment. Over 487–494 (VQLFWTQD) the chain is Cytoplasmic.

The protein belongs to the GDA1/CD39 NTPase family. Requires Ca(2+) as cofactor. Mg(2+) serves as cofactor. Post-translationally, N-glycosylated. Present in liver, and at lower level in jejunum and kidney. Limited to the canalicular domain of hepatocytes (at protein level).

Its subcellular location is the cell membrane. The enzyme catalyses a ribonucleoside 5'-triphosphate + 2 H2O = a ribonucleoside 5'-phosphate + 2 phosphate + 2 H(+). Its function is as follows. Canalicular ectonucleoside NTPDase responsible for the main hepatic NTPDase activity. Ectonucleoside NTPDases catalyze the hydrolysis of gamma- and beta-phosphate residues of nucleotides, playing a central role in concentration of extracellular nucleotides. Has activity toward ATP, ADP, UTP and UDP, but not toward AMP. In Rattus norvegicus (Rat), this protein is Ectonucleoside triphosphate diphosphohydrolase 8 (Entpd8).